A 331-amino-acid chain; its full sequence is N-acetyl-alpha-D-glucosaminyl-diphospho-ditrans,octacis-undecaprenol 4-epimerase (331 aa).

NAD(+)-binding positions include 13–14 (FV), 34–39 (QQSHFY), 47–48 (DV), S109, Y132, and K136. Substrate contacts are provided by S109 and Y132. Catalysis depends on Y132, which acts as the Proton acceptor. Residues 183 to 184 (GK) and 199 to 201 (YVG) each bind substrate.

It belongs to the NAD(P)-dependent epimerase/dehydratase family. NAD(+) is required as a cofactor.

The protein resides in the cell membrane. The enzyme catalyses N-acetyl-alpha-D-glucosaminyl-di-trans,octa-cis-undecaprenyl diphosphate = N-acetyl-alpha-D-galactosaminyl-di-trans,octa-cis-undecaprenyl diphosphate. It participates in bacterial outer membrane biogenesis; LPS O-antigen biosynthesis. Its function is as follows. Involved in biosynthesis of the repeating tetrasaccharide unit of the O-antigen. Catalyzes the reversible epimerization of the hydroxyl group at position C4 of undecaprenyl pyrophosphate-N-acetylglucosamine (UndPP-GlcNAc) to yield undecaprenyl pyrophosphate-N-acetylgalactosamine (UndPP-GalNAc). The protein is N-acetyl-alpha-D-glucosaminyl-diphospho-ditrans,octacis-undecaprenol 4-epimerase of Escherichia coli O157:H7.